The sequence spans 109 residues: Larval cuticle protein 1 (109 aa).

The first 14 residues, 1 to 14, serve as a signal peptide directing secretion; it reads MILVALALVALAVA. The Chitin-binding type R&amp;R domain maps to 34 to 107; sequence EGSYQFGFET…AEGSSIPKPA (74 aa).

In terms of biological role, component of the cuticle of the larva of Helicoverpa armigera. The chain is Larval cuticle protein 1 (LCP1) from Helicoverpa armigera (Cotton bollworm).